Reading from the N-terminus, the 59-residue chain is Large ribosomal subunit protein bL32c (59 aa).

Over residues 1–19 (MAVPKKRTSKAKKNARKAN) the composition is skewed to basic residues. Residues 1–24 (MAVPKKRTSKAKKNARKANWKNQA) form a disordered region.

The protein belongs to the bacterial ribosomal protein bL32 family.

The protein localises to the plastid. It is found in the chloroplast. The polypeptide is Large ribosomal subunit protein bL32c (rpl32) (Porphyra purpurea (Red seaweed)).